The chain runs to 1488 residues: Eukaryotic translation initiation factor 4G (1488 aa).

3 disordered regions span residues 196–320, 337–367, and 415–707; these read VQHR…GQTS, DSEK…GKSE, and THQI…MTEA. Composition is skewed to basic and acidic residues over residues 216 to 244 and 274 to 299; these read VSEK…EKHP and ADEK…RNDT. 4 stretches are compositionally biased toward polar residues: residues 300–310, 345–360, 448–464, and 473–495; these read KNLPQQPQSAS, SKVS…SSIS, SLAT…SFVT, and CTTS…TQTL. Low complexity predominate over residues 496-520; the sequence is SASVDASDVSEVNSGTSSESTSQST. Residues 555-566 are compositionally biased toward basic and acidic residues; that stretch reads QVKHADGAKDES. Positions 627-646 are enriched in polar residues; the sequence is QEQSESVATSDGADSSSTVD. Basic and acidic residues predominate over residues 651 to 671; that stretch reads LPEESEREVMCEDDGKKKVEP. Residues 683–696 show a composition bias toward polar residues; it reads PKLQSSDSGNQASA. The EIF4E-binding stretch occupies residues 709 to 721; that stretch reads GRKKYSRDFLLTF. Positions 753-784 are enriched in basic and acidic residues; it reads DREPHPSSARGSDRPTSRGDRRGPAMDDDKWL. Disordered regions lie at residues 753 to 795, 974 to 1000, and 1107 to 1299; these read DREP…PNRD, RGER…EREE, and WQQR…SEEE. Residues 883-1106 form the MIF4G domain; sequence QRQLKAILNK…RDSIDLRKNK (224 aa). Positions 978–989 are enriched in acidic residues; sequence EEAEADKTEEEG. 4 stretches are compositionally biased toward basic and acidic residues: residues 990–1000, 1111–1132, 1181–1191, and 1254–1267; these read EIKQTKEEREE, RKVD…ERHA, IRYEQERHQFD, and TRED…DRFS. The span at 1273-1294 shows a compositional bias: polar residues; it reads AAQSASSSHRPASQEGRSGNKS. Positions 1299-1423 constitute an MI domain; it reads ELREKSIATI…VLQDVGKLIE (125 aa).

This sequence belongs to the eukaryotic initiation factor 4G family. In terms of assembly, EIF4F is a multi-subunit complex, the composition of which varies with external and internal environmental conditions. It is composed of at least EIF4A, EIF4E and EIF4G. In higher plants two isoforms of EIF4F have been identified, named isoform EIF4F and isoform EIF(iso)4F. Isoform EIF4F has subunits p220 and p26, whereas isoform EIF(iso)4F has subunits p82 and p28.

Functionally, component of the protein complex eIF4F, which is involved in the recognition of the mRNA cap, ATP-dependent unwinding of 5'-terminal secondary structure and recruitment of mRNA to the ribosome. This chain is Eukaryotic translation initiation factor 4G, found in Triticum aestivum (Wheat).